The chain runs to 107 residues: Iron-binding protein IscA (107 aa).

Residues cysteine 35, cysteine 99, and cysteine 101 each contribute to the Fe cation site.

Belongs to the HesB/IscA family. In terms of assembly, homodimer; may form tetramers and higher multimers. Fe cation is required as a cofactor.

Its function is as follows. Is able to transfer iron-sulfur clusters to apo-ferredoxin. Multiple cycles of [2Fe2S] cluster formation and transfer are observed, suggesting that IscA acts catalytically. Recruits intracellular free iron so as to provide iron for the assembly of transient iron-sulfur cluster in IscU in the presence of IscS, L-cysteine and the thioredoxin reductase system TrxA/TrxB. The protein is Iron-binding protein IscA of Salmonella newport (strain SL254).